Consider the following 450-residue polypeptide: tRNA (guanine-N(7)-)-methyltransferase non-catalytic subunit TRM82 (450 aa).

Basic and acidic residues predominate over residues 69-82 (AAKKLKTNEGEAIE). Residues 69–103 (AAKKLKTNEGEAIERPGNQRRVPLPGKDPKVPVPG) form a disordered region. WD repeat units lie at residues 108-147 (PVYQ…KDNC), 200-241 (GHVS…VIDK), and 245-285 (GHKE…LMSS).

Belongs to the WD repeat TRM82 family. As to quaternary structure, forms a heterodimer with the catalytic subunit TRM8.

The protein localises to the nucleus. It functions in the pathway tRNA modification; N(7)-methylguanine-tRNA biosynthesis. Functionally, required for the formation of N(7)-methylguanine at position 46 (m7G46) in tRNA. In the complex, it is required to stabilize and induce conformational changes of the catalytic subunit. This Eremothecium gossypii (strain ATCC 10895 / CBS 109.51 / FGSC 9923 / NRRL Y-1056) (Yeast) protein is tRNA (guanine-N(7)-)-methyltransferase non-catalytic subunit TRM82.